A 206-amino-acid polypeptide reads, in one-letter code: Small ribosomal subunit protein uS4 (206 aa).

One can recognise an S4 RNA-binding domain in the interval 96 to 156 (GRLDNVVYRM…EKAKKQARIK (61 aa)).

It belongs to the universal ribosomal protein uS4 family. As to quaternary structure, part of the 30S ribosomal subunit. Contacts protein S5. The interaction surface between S4 and S5 is involved in control of translational fidelity.

Functionally, one of the primary rRNA binding proteins, it binds directly to 16S rRNA where it nucleates assembly of the body of the 30S subunit. In terms of biological role, with S5 and S12 plays an important role in translational accuracy. The protein is Small ribosomal subunit protein uS4 of Tolumonas auensis (strain DSM 9187 / NBRC 110442 / TA 4).